Here is a 142-residue protein sequence, read N- to C-terminus: 3-hydroxyacyl-[acyl-carrier-protein] dehydratase FabZ (142 aa).

Residue His-48 is part of the active site.

The protein belongs to the thioester dehydratase family. FabZ subfamily.

The protein localises to the cytoplasm. It carries out the reaction a (3R)-hydroxyacyl-[ACP] = a (2E)-enoyl-[ACP] + H2O. Its function is as follows. Involved in unsaturated fatty acids biosynthesis. Catalyzes the dehydration of short chain beta-hydroxyacyl-ACPs and long chain saturated and unsaturated beta-hydroxyacyl-ACPs. In Prochlorococcus marinus (strain MIT 9313), this protein is 3-hydroxyacyl-[acyl-carrier-protein] dehydratase FabZ.